The primary structure comprises 734 residues: Subtilisin-like protease (734 aa).

A signal peptide spans Met1–Ala20. The Inhibitor I9 domain occupies Thr28 to His109. One can recognise a Peptidase S8 domain in the interval Pro114–Ser591. Asp141 serves as the catalytic Charge relay system. Asn172 is a glycosylation site (N-linked (GlcNAc...) asparagine). His199 (charge relay system) is an active-site residue. 2 N-linked (GlcNAc...) asparagine glycosylation sites follow: Asn222 and Asn306. The region spanning Pro357–Met442 is the PA domain. 2 N-linked (GlcNAc...) asparagine glycosylation sites follow: Asn448 and Asn509. Ser524 (charge relay system) is an active-site residue. Residue Asn652 is glycosylated (N-linked (GlcNAc...) asparagine).

This sequence belongs to the peptidase S8 family.

It localises to the secreted. The protein resides in the extracellular space. It is found in the apoplast. Functionally, required for arbuscular mycorrhiza (AM) development during AM symbiosis with AM fungi (e.g. Glomeromycota intraradices). The protein is Subtilisin-like protease of Petunia hybrida (Petunia).